Reading from the N-terminus, the 54-residue chain is Large ribosomal subunit protein bL32c (54 aa).

It belongs to the bacterial ribosomal protein bL32 family.

The protein localises to the plastid. It localises to the chloroplast. This is Large ribosomal subunit protein bL32c from Cucumis sativus (Cucumber).